The primary structure comprises 243 residues: Small ribosomal subunit protein uS5 (243 aa).

Positions 1-10 (MSDNETKETQ) are enriched in basic and acidic residues. The disordered stretch occupies residues 1–50 (MSDNETKETQVAEETQNTVATESNNEDRKGRRGQRGEGRRGERRNRREEN). Residues 12–23 (AEETQNTVATES) are compositionally biased toward polar residues. Over residues 25–50 (NEDRKGRRGQRGEGRRGERRNRREEN) the composition is skewed to basic and acidic residues. In terms of domain architecture, S5 DRBM spans 55-118 (LLDRVVTINR…LDAKKHMFSV (64 aa)).

Belongs to the universal ribosomal protein uS5 family. Part of the 30S ribosomal subunit. Contacts proteins S4 and S8.

With S4 and S12 plays an important role in translational accuracy. Its function is as follows. Located at the back of the 30S subunit body where it stabilizes the conformation of the head with respect to the body. This chain is Small ribosomal subunit protein uS5, found in Bifidobacterium longum (strain DJO10A).